A 469-amino-acid polypeptide reads, in one-letter code: 3-isopropylmalate dehydratase large subunit (469 aa).

Residues Cys347, Cys407, and Cys410 each contribute to the [4Fe-4S] cluster site.

It belongs to the aconitase/IPM isomerase family. LeuC type 1 subfamily. As to quaternary structure, heterodimer of LeuC and LeuD. The cofactor is [4Fe-4S] cluster.

The catalysed reaction is (2R,3S)-3-isopropylmalate = (2S)-2-isopropylmalate. The protein operates within amino-acid biosynthesis; L-leucine biosynthesis; L-leucine from 3-methyl-2-oxobutanoate: step 2/4. Its function is as follows. Catalyzes the isomerization between 2-isopropylmalate and 3-isopropylmalate, via the formation of 2-isopropylmaleate. The polypeptide is 3-isopropylmalate dehydratase large subunit (Prochlorococcus marinus (strain NATL1A)).